Here is a 1067-residue protein sequence, read N- to C-terminus: [F-actin]-monooxygenase MICAL1 (1067 aa).

The monooxygenase domain stretch occupies residues 1–489; sequence MASPTSTNPA…RDLYDVLAKE (489 aa). Residues cysteine 95, 114–116, 121–123, phenylalanine 181, tyrosine 293, and aspartate 393 each bind FAD; these read EKR and RHN. Threonine 475 carries the phosphothreonine modification. Residues 508-612 form the Calponin-homology (CH) domain; that stretch reads AGTQEELLRW…YLSHFHSAFK (105 aa). Serine 617 is modified (phosphoserine). Positions 645 to 688 are disordered; sequence SRAKENAEDAGGKKLRLEMEAETPSTEVPPDPEPGVPLTPPSQH. Residues 646 to 663 are compositionally biased toward basic and acidic residues; it reads RAKENAEDAGGKKLRLEM. A coiled-coil region spans residues 646–666; the sequence is RAKENAEDAGGKKLRLEMEAE. Positions 671–684 are enriched in pro residues; it reads EVPPDPEPGVPLTP. One can recognise an LIM zinc-binding domain in the interval 695–757; the sequence is DLCALCGEHL…LQHLPQTDHK (63 aa). Positions 697, 700, 718, 721, 724, 727, 747, and 750 each coordinate Zn(2+). Over residues 755–766 the composition is skewed to basic and acidic residues; sequence DHKAEGSDRGPE. 2 disordered regions span residues 755–838 and 867–886; these read DHKA…RSCS and KEEK…VPLD. Polar residues predominate over residues 773 to 789; sequence PSENSMPPGLSTPTASQ. Phosphoserine occurs at positions 872, 875, and 876. The segment covering 876–886 has biased composition (acidic residues); sequence SEEEEEDVPLD. The interval 901–1067 is important for interaction with RAB8A; that stretch reads GTMNNYPTWR…ELALGTGAQG (167 aa). In terms of domain architecture, bMERB spans 918–1067; the sequence is KEEEMKRFCK…ELALGTGAQG (150 aa). 2 coiled-coil regions span residues 919-962 and 999-1027; these read EEEM…QSSS and NLEE…AADR. Serine 1057 bears the Phosphoserine mark.

The protein belongs to the Mical family. As to quaternary structure, interacts with STK38 and STK38L. Interacts with RAB1B, RAB8A, RAB10, RAB13, RAB15 and RAB35 (in their GTP-bound forms); binding to RAB1B is of low affinity compared to other Rab proteins; at least in case of RAB8A and RAB10 can bind 2 molecules of the Rab proteins simultaneously; ternary complex formation of RAB8A, RAB13 and MICAL1 is possible. Associates with the SH3 domain of NEDD9. Interacts with VIM and PLXNA3. Interacts with GRAF1/ARHGAP26, GRAF2/ARHGAP10, RAB8A, RAB8B and RAB10; may bind simultaneously to GRAFs and Rabs and connects GRAFs to Rabs. Does not interact with RAB1 and RAB11A. The cofactor is FAD. As to expression, expressed in the thymus, lung, spleen, kidney, testis and hematopoietic cells.

Its subcellular location is the cytoplasm. It localises to the cytoskeleton. It is found in the endosome membrane. The protein localises to the midbody. The enzyme catalyses L-methionyl-[F-actin] + NADPH + O2 + H(+) = L-methionyl-(R)-S-oxide-[F-actin] + NADP(+) + H2O. It carries out the reaction NADPH + O2 + H(+) = H2O2 + NADP(+). Functionally, monooxygenase that promotes depolymerization of F-actin by mediating oxidation of specific methionine residues on actin to form methionine-sulfoxide, resulting in actin filament disassembly and preventing repolymerization. In the absence of actin, it also functions as a NADPH oxidase producing H(2)O(2). Acts as a cytoskeletal regulator that connects NEDD9 to intermediate filaments. Also acts as a negative regulator of apoptosis via its interaction with STK38 and STK38L; acts by antagonizing STK38 and STK38L activation by MST1/STK4. Involved in regulation of lamina-specific connectivity in the nervous system such as the development of lamina-restricted hippocampal connections. Through redox regulation of the actin cytoskeleton controls the intracellular distribution of secretory vesicles containing L1/neurofascin/NgCAM family proteins in neurons, thereby regulating their cell surface levels. May act as Rab effector protein and play a role in vesicle trafficking. Promotes endosomal tubule extension by associating with RAB8 (RAB8A or RAB8B), RAB10 and GRAF (GRAF1/ARHGAP26 or GRAF2/ARHGAP10) on the endosomal membrane which may connect GRAFs to Rabs, thereby participating in neosynthesized Rab8-Rab10-Rab11-dependent protein export. In Homo sapiens (Human), this protein is [F-actin]-monooxygenase MICAL1 (MICAL1).